The following is a 311-amino-acid chain: Olfactory receptor 5AN1 (311 aa).

The Extracellular portion of the chain corresponds to methionine 1 to lysine 26. N-linked (GlcNAc...) asparagine glycosylation occurs at asparagine 6. Residues valine 27 to isoleucine 47 form a helical membrane-spanning segment. Residues valine 48–histidine 55 lie on the Cytoplasmic side of the membrane. The chain crosses the membrane as a helical span at residues leucine 56–serine 76. Topologically, residues serine 77–isoleucine 100 are extracellular. Cysteine 98 and cysteine 190 are disulfide-bonded. Residues glutamine 101 to tyrosine 121 form a helical membrane-spanning segment. Topologically, residues aspartate 122–serine 134 are cytoplasmic. Residues serine 135–threonine 155 form a helical membrane-spanning segment. Residues alanine 156–glutamine 197 lie on the Extracellular side of the membrane. A helical transmembrane segment spans residues valine 198–serine 218. At tyrosine 219–alanine 238 the chain is on the cytoplasmic side. A helical transmembrane segment spans residues phenylalanine 239–valine 259. Residues tyrosine 260–aspartate 272 lie on the Extracellular side of the membrane. The helical transmembrane segment at arginine 273–leucine 293 threads the bilayer. Residues arginine 294–cysteine 311 lie on the Cytoplasmic side of the membrane.

The protein belongs to the G-protein coupled receptor 1 family.

It is found in the cell membrane. Odorant receptor for musk, which specifically recognizes muscone, musk xylol, and musk ketone. Ligand-binding causes a conformation change that triggers signaling via G(s)-class of G alpha protein GNAL, activating adenylyl cyclase. This is Olfactory receptor 5AN1 from Homo sapiens (Human).